The sequence spans 320 residues: RNA-binding protein Musashi homolog 1 (320 aa).

Residues M1–T14 are compositionally biased toward low complexity. Residues M1–F48 are disordered. T18 is subject to Phosphothreonine. A phosphoserine mark is found at S19 and S34. Positions D23–S38 are enriched in basic and acidic residues. RRM domains are found at residues G45–R124 and K134–P211. Required for binding to target mRNAs regions lie at residues F88 to F93 and F177 to F182.

This sequence belongs to the Musashi family. Expressed in the gut and in AVA, AFD, RMD, RMED, RMEV, RMER and RMEL neurons (at protein level). In the tail expressed in neurons and all the ray sensilla. Expressed in male specific C1-C4 neurons.

It is found in the cytoplasm. The protein resides in the perikaryon. Its function is as follows. RNA binding protein that regulates the expression of target mRNAs at the translation level. Binds RNA containing the 5'-[GA]U(1-3)AGU-3' motif located in the 3' UTR of the target mRNA. Binds to the mRNA of three Arp2/3 complex components arx-1, arx-2 and arx-3 and negatively regulates their translation during association learning. Plays a role in time-dependent memory loss and the retention of conditioned behavior over time, probably through negative regulation of the Arp2/3 actin cytoskeleton branching complex and regulation of synapse size. Required for two aspects of male mating behavior: turning around the hermaphrodite head or tail and vulva location. The polypeptide is RNA-binding protein Musashi homolog 1 (Caenorhabditis elegans).